We begin with the raw amino-acid sequence, 167 residues long: ATP synthase subunit b (167 aa).

The helical transmembrane segment at 7–25 threads the bilayer; it reads SFLLAVSFVIFIYLIYRPA.

Belongs to the ATPase B chain family. F-type ATPases have 2 components, F(1) - the catalytic core - and F(0) - the membrane proton channel. F(1) has five subunits: alpha(3), beta(3), gamma(1), delta(1), epsilon(1). F(0) has three main subunits: a(1), b(2) and c(10-14). The alpha and beta chains form an alternating ring which encloses part of the gamma chain. F(1) is attached to F(0) by a central stalk formed by the gamma and epsilon chains, while a peripheral stalk is formed by the delta and b chains.

The protein localises to the cell inner membrane. Its function is as follows. F(1)F(0) ATP synthase produces ATP from ADP in the presence of a proton or sodium gradient. F-type ATPases consist of two structural domains, F(1) containing the extramembraneous catalytic core and F(0) containing the membrane proton channel, linked together by a central stalk and a peripheral stalk. During catalysis, ATP synthesis in the catalytic domain of F(1) is coupled via a rotary mechanism of the central stalk subunits to proton translocation. In terms of biological role, component of the F(0) channel, it forms part of the peripheral stalk, linking F(1) to F(0). In Rickettsia typhi (strain ATCC VR-144 / Wilmington), this protein is ATP synthase subunit b.